Reading from the N-terminus, the 186-residue chain is MLALFNKLLDWFRALFWKEEMELTLVGLQYSGKTTFVNVIASGQFNEDMIPTVGFNMRKITKGNVTIKLWDIGGQPRFRSMWERYCRGVSAIVYMVDAADQEKIEASKNELHNLLDKPQLQGIPVLVLGNKRDLPGALDEKELIEKMNLSAIQDREICCYSISCKEKDNIDITLQWLIQHSKSRRS.

The note=Mediates targeting to membranes intramembrane region spans 1-19 (MLALFNKLLDWFRALFWKE). GTP-binding positions include 29–35 (QYSGKTT), 71–75 (DIGGQ), and 130–133 (NKRD).

It belongs to the small GTPase superfamily. Arf family.

It localises to the late endosome membrane. The protein resides in the lysosome membrane. Its subcellular location is the cytoplasm. The protein localises to the cytoskeleton. It is found in the spindle. It localises to the cell projection. The protein resides in the axon. Its subcellular location is the synapse. In terms of biological role, plays a role in lysosome motility. In neurons, mediates the anterograde axonal long-range transport of presynaptic lysosome-related vesicles required for presynaptic biogenesis and synaptic function. May play a role in chromosome segregation. This is ADP-ribosylation factor-like protein 8A (ARL8A) from Gallus gallus (Chicken).